A 403-amino-acid chain; its full sequence is Acetylornithine aminotransferase (403 aa).

Residues 101 to 102 (GA) and Phe-134 contribute to the pyridoxal 5'-phosphate site. N(2)-acetyl-L-ornithine is bound at residue Arg-137. A pyridoxal 5'-phosphate-binding site is contributed by 219–222 (DEVQ). An N6-(pyridoxal phosphate)lysine modification is found at Lys-248. Residue Thr-276 coordinates N(2)-acetyl-L-ornithine. Thr-277 is a pyridoxal 5'-phosphate binding site.

Belongs to the class-III pyridoxal-phosphate-dependent aminotransferase family. ArgD subfamily. In terms of assembly, homodimer. The cofactor is pyridoxal 5'-phosphate.

It is found in the cytoplasm. The enzyme catalyses N(2)-acetyl-L-ornithine + 2-oxoglutarate = N-acetyl-L-glutamate 5-semialdehyde + L-glutamate. The protein operates within amino-acid biosynthesis; L-arginine biosynthesis; N(2)-acetyl-L-ornithine from L-glutamate: step 4/4. This is Acetylornithine aminotransferase from Brucella melitensis biotype 1 (strain ATCC 23456 / CCUG 17765 / NCTC 10094 / 16M).